The following is a 94-amino-acid chain: Large ribosomal subunit protein bL25 (94 aa).

The protein belongs to the bacterial ribosomal protein bL25 family. Part of the 50S ribosomal subunit; part of the 5S rRNA/L5/L18/L25 subcomplex. Contacts the 5S rRNA. Binds to the 5S rRNA independently of L5 and L18.

Functionally, this is one of the proteins that binds to the 5S RNA in the ribosome where it forms part of the central protuberance. The protein is Large ribosomal subunit protein bL25 of Salmonella arizonae (strain ATCC BAA-731 / CDC346-86 / RSK2980).